We begin with the raw amino-acid sequence, 450 residues long: Glucose-6-phosphate isomerase (450 aa).

Glu290 acts as the Proton donor in catalysis. Catalysis depends on residues His311 and Lys425.

It belongs to the GPI family.

The protein resides in the cytoplasm. It carries out the reaction alpha-D-glucose 6-phosphate = beta-D-fructose 6-phosphate. It participates in carbohydrate biosynthesis; gluconeogenesis. The protein operates within carbohydrate degradation; glycolysis; D-glyceraldehyde 3-phosphate and glycerone phosphate from D-glucose: step 2/4. Functionally, catalyzes the reversible isomerization of glucose-6-phosphate to fructose-6-phosphate. The protein is Glucose-6-phosphate isomerase of Listeria innocua serovar 6a (strain ATCC BAA-680 / CLIP 11262).